The sequence spans 363 residues: Phosphoserine aminotransferase (363 aa).

Arg42 serves as a coordination point for L-glutamate. Residues Trp105, Thr155, Asp175, and Gln198 each coordinate pyridoxal 5'-phosphate. Lys199 carries the N6-(pyridoxal phosphate)lysine modification. Pyridoxal 5'-phosphate is bound at residue 240-241 (NT).

The protein belongs to the class-V pyridoxal-phosphate-dependent aminotransferase family. SerC subfamily. In terms of assembly, homodimer. Pyridoxal 5'-phosphate serves as cofactor.

Its subcellular location is the cytoplasm. It carries out the reaction O-phospho-L-serine + 2-oxoglutarate = 3-phosphooxypyruvate + L-glutamate. The enzyme catalyses 4-(phosphooxy)-L-threonine + 2-oxoglutarate = (R)-3-hydroxy-2-oxo-4-phosphooxybutanoate + L-glutamate. It participates in amino-acid biosynthesis; L-serine biosynthesis; L-serine from 3-phospho-D-glycerate: step 2/3. The protein operates within cofactor biosynthesis; pyridoxine 5'-phosphate biosynthesis; pyridoxine 5'-phosphate from D-erythrose 4-phosphate: step 3/5. Its function is as follows. Catalyzes the reversible conversion of 3-phosphohydroxypyruvate to phosphoserine and of 3-hydroxy-2-oxo-4-phosphonooxybutanoate to phosphohydroxythreonine. This is Phosphoserine aminotransferase from Janthinobacterium sp. (strain Marseille) (Minibacterium massiliensis).